The sequence spans 206 residues: CBS domain-containing protein CBSX3, mitochondrial (206 aa).

The N-terminal 39 residues, 1 to 39 (MQGVIRSFVSGGNVVKGSVLQHLRVINPAIQPSVFCSRS), are a transit peptide targeting the mitochondrion. CBS domains are found at residues 61–127 (MKSK…GRSS) and 136–194 (MTEE…HREE).

The protein resides in the mitochondrion. This chain is CBS domain-containing protein CBSX3, mitochondrial (CBSX3), found in Arabidopsis thaliana (Mouse-ear cress).